A 337-amino-acid polypeptide reads, in one-letter code: Eukaryotic translation initiation factor 3 subunit H (337 aa).

An MPN domain is found at 21–153 (VQCDGLAVMK…LKAYRLTPQA (133 aa)).

It belongs to the eIF-3 subunit H family. Component of the eukaryotic translation initiation factor 3 (eIF-3) complex. The eIF-3 complex interacts with pix. Interacts with mxt.

It is found in the cytoplasm. Component of the eukaryotic translation initiation factor 3 (eIF-3) complex, which is involved in protein synthesis of a specialized repertoire of mRNAs and, together with other initiation factors, stimulates binding of mRNA and methionyl-tRNAi to the 40S ribosome. The eIF-3 complex specifically targets and initiates translation of a subset of mRNAs involved in cell proliferation. The chain is Eukaryotic translation initiation factor 3 subunit H from Drosophila willistoni (Fruit fly).